Here is a 279-residue protein sequence, read N- to C-terminus: Acyl-coenzyme A thioesterase MBLAC2 (279 aa).

S2 is modified (N-acetylserine). Zn(2+) is bound by residues H83, H85, D87, H88, H170, D189, and H231. Residue C254 is the site of S-palmitoyl cysteine attachment.

Belongs to the metallo-beta-lactamase superfamily. Glyoxalase II family. The cofactor is Zn(2+). Palmitoylated on Cys-254 by ZDHHC20.

The protein localises to the endoplasmic reticulum membrane. The protein resides in the cell membrane. It catalyses the reaction hexadecanoyl-CoA + H2O = hexadecanoate + CoA + H(+). It carries out the reaction dodecanoyl-CoA + H2O = dodecanoate + CoA + H(+). The enzyme catalyses tetradecanoyl-CoA + H2O = tetradecanoate + CoA + H(+). The catalysed reaction is octadecanoyl-CoA + H2O = octadecanoate + CoA + H(+). It catalyses the reaction a beta-lactam + H2O = a substituted beta-amino acid. Functionally, acyl-CoA thioesterases are a group of enzymes that catalyze the hydrolysis of acyl-CoAs to the free fatty acid and coenzyme A (CoASH), providing the potential to regulate intracellular levels of acyl-CoAs, free fatty acids and CoASH. Has an acyl-CoA thioesterase activity towards the long chain fatty acyl-CoA thioester palmitoyl-CoA (hexadecanoyl-CoA; C16:0-CoA). Displays a substrate preference for fatty acyl-CoAs with chain-lengths C12-C18. The sequence is that of Acyl-coenzyme A thioesterase MBLAC2 (MBLAC2) from Bos taurus (Bovine).